The sequence spans 288 residues: Diaminopimelate epimerase (288 aa).

Residues Asn-13, Gln-46, and Asn-66 each coordinate substrate. Cys-75 (proton donor) is an active-site residue. Residues 76 to 77, Asn-166, Asn-199, and 217 to 218 each bind substrate; these read GN and ER. Cys-226 (proton acceptor) is an active-site residue. Residue 227 to 228 coordinates substrate; sequence GT.

It belongs to the diaminopimelate epimerase family. As to quaternary structure, homodimer.

It localises to the cytoplasm. It carries out the reaction (2S,6S)-2,6-diaminopimelate = meso-2,6-diaminopimelate. The protein operates within amino-acid biosynthesis; L-lysine biosynthesis via DAP pathway; DL-2,6-diaminopimelate from LL-2,6-diaminopimelate: step 1/1. In terms of biological role, catalyzes the stereoinversion of LL-2,6-diaminopimelate (L,L-DAP) to meso-diaminopimelate (meso-DAP), a precursor of L-lysine and an essential component of the bacterial peptidoglycan. The polypeptide is Diaminopimelate epimerase (Cupriavidus metallidurans (strain ATCC 43123 / DSM 2839 / NBRC 102507 / CH34) (Ralstonia metallidurans)).